The sequence spans 192 residues: Lipid A acyltransferase PagP (192 aa).

The N-terminal stretch at 1-29 is a signal peptide; sequence MVVNVVIVAKKYFLFITLLIIQVSLPAHA. Catalysis depends on residues His-64, Asp-107, and Ser-108.

Belongs to the lipid A palmitoyltransferase family. Homodimer.

Its subcellular location is the cell outer membrane. It catalyses the reaction a lipid A + a 1,2-diacyl-sn-glycero-3-phosphocholine = a hepta-acyl lipid A + a 2-acyl-sn-glycero-3-phosphocholine. The enzyme catalyses a lipid IVA + a 1,2-diacyl-sn-glycero-3-phosphocholine = a lipid IVB + a 2-acyl-sn-glycero-3-phosphocholine. It carries out the reaction a lipid IIA + a 1,2-diacyl-sn-glycero-3-phosphocholine = a lipid IIB + a 2-acyl-sn-glycero-3-phosphocholine. Functionally, transfers a fatty acid residue from the sn-1 position of a phospholipid to the N-linked hydroxyfatty acid chain on the proximal unit of lipid A or its precursors. This is Lipid A acyltransferase PagP from Citrobacter rodentium (strain ICC168) (Citrobacter freundii biotype 4280).